A 112-amino-acid chain; its full sequence is Large ribosomal subunit protein P2A (112 aa).

A disordered region spans residues G83 to D112. A compositionally biased stretch (basic and acidic residues) spans E89 to E98.

This sequence belongs to the eukaryotic ribosomal protein P1/P2 family. P1 and P2 exist as dimers at the large ribosomal subunit. In terms of processing, phosphorylated.

Functionally, plays an important role in the elongation step of protein synthesis. The sequence is that of Large ribosomal subunit protein P2A (RPP2A) from Zea mays (Maize).